The sequence spans 89 residues: Ixosin-B (89 aa).

An N-terminal signal peptide occupies residues 1–26 (MASGWTHRLLLLAAVVTLGATPIAAA). Positions 27-57 (SMEYLVTAPGYLTPNADIKITAVVTNPSSAG) are excised as a propeptide. The interval 68–89 (SGIQPEQHSSGKSDVRRWRSRY) is disordered. Residues 76–89 (SSGKSDVRRWRSRY) are compositionally biased toward basic and acidic residues.

In terms of biological role, has antifungal activity against C.albicans. Has antibacterial activity against the Gram-positive bacterium S.aureus and the Gram-negative bacterium E.coli. Lacks hemolytic activity against rabbit erythrocytes. This chain is Ixosin-B, found in Ixodes sinensis (Hard tick).